The following is a 347-amino-acid chain: D-fructose 1,6-bisphosphatase class 2/sedoheptulose 1,7-bisphosphatase (347 aa).

Mn(2+)-binding residues include Asp-33, Glu-57, Asp-97, and Glu-100. Substrate-binding positions include 100-102 (EGT), Tyr-131, 176-178 (RKR), and 198-200 (DGD). Glu-225 contacts Mn(2+).

This sequence belongs to the FBPase class 2 family. In terms of assembly, homotetramer. It depends on Mn(2+) as a cofactor.

It carries out the reaction beta-D-fructose 1,6-bisphosphate + H2O = beta-D-fructose 6-phosphate + phosphate. The catalysed reaction is D-sedoheptulose 1,7-bisphosphate + H2O = D-sedoheptulose 7-phosphate + phosphate. It participates in carbohydrate biosynthesis; Calvin cycle. Catalyzes the hydrolysis of fructose 1,6-bisphosphate (Fru 1,6-P2) and sedoheptulose 1,7-bisphosphate (Sed 1,7-P2) to fructose 6-phosphate and sedoheptulose 7-phosphate, respectively. The protein is D-fructose 1,6-bisphosphatase class 2/sedoheptulose 1,7-bisphosphatase of Synechococcus sp. (strain JA-3-3Ab) (Cyanobacteria bacterium Yellowstone A-Prime).